A 122-amino-acid chain; its full sequence is Defensin-like protein 181 (122 aa).

The signal sequence occupies residues 1–26; the sequence is MERIPSLASLVSLLIIFATVVNQTRA. 8 cysteine pairs are disulfide-bonded: C29–C70, C36–C55, C39–C64, C43–C66, C76–C122, C87–C107, C92–C116, and C96–C118.

It belongs to the DEFL family.

The protein localises to the secreted. Confers broad-spectrum resistance to pathogens. In Arabidopsis thaliana (Mouse-ear cress), this protein is Defensin-like protein 181 (PDF3.1).